Reading from the N-terminus, the 112-residue chain is Large ribosomal subunit protein uL22 (112 aa).

It belongs to the universal ribosomal protein uL22 family. Part of the 50S ribosomal subunit.

This protein binds specifically to 23S rRNA; its binding is stimulated by other ribosomal proteins, e.g. L4, L17, and L20. It is important during the early stages of 50S assembly. It makes multiple contacts with different domains of the 23S rRNA in the assembled 50S subunit and ribosome. Functionally, the globular domain of the protein is located near the polypeptide exit tunnel on the outside of the subunit, while an extended beta-hairpin is found that lines the wall of the exit tunnel in the center of the 70S ribosome. The sequence is that of Large ribosomal subunit protein uL22 from Sorangium cellulosum (strain So ce56) (Polyangium cellulosum (strain So ce56)).